A 452-amino-acid chain; its full sequence is C4-dicarboxylate transport protein 1 (452 aa).

9 helical membrane passes run 18-38 (FQVV…PSVG), 51-71 (LIKM…IAGM), 83-103 (LALL…LLLV), 151-171 (AFAK…GFAL), 191-211 (VLFT…FGAM), 229-249 (LMGA…GAIA), 304-324 (GYSF…VFIA), 337-357 (ITLL…TGSG), and 359-379 (IVLA…LALI). The segment at 426–452 (WEEAQEPERVLDKKTEHMPVSAMSDAG) is disordered. Over residues 431–442 (EPERVLDKKTEH) the composition is skewed to basic and acidic residues.

Belongs to the dicarboxylate/amino acid:cation symporter (DAACS) (TC 2.A.23) family.

The protein resides in the cell inner membrane. In terms of biological role, responsible for the transport of dicarboxylates such as succinate, fumarate, and malate from the periplasm across the membrane. This Polaromonas naphthalenivorans (strain CJ2) protein is C4-dicarboxylate transport protein 1.